Reading from the N-terminus, the 416-residue chain is CBL-interacting serine/threonine-protein kinase 21 (416 aa).

Residues 12–264 (YEIGRTIGEG…AEIIIKDSWF (253 aa)) form the Protein kinase domain. Residues 18 to 26 (IGEGNFAKV) and lysine 41 each bind ATP. Aspartate 134 acts as the Proton acceptor in catalysis. Positions 152 to 178 (DFGLSAVPKSGDMLSTACGSPCYIAPE) are activation loop. Serine 156 is subject to Phosphoserine. At threonine 167 the chain carries Phosphothreonine. An NAF domain is found at 291–315 (ASSNFINAFQIIAMSSDLDLSGLFE). The PPI stretch occupies residues 321–351 (RYKTRIGSKNTAQETIKKIEAAATYVSLSVE).

This sequence belongs to the protein kinase superfamily. CAMK Ser/Thr protein kinase family. SNF1 subfamily. As to quaternary structure, interacts with CBL9. The cofactor is Mn(2+).

It carries out the reaction L-seryl-[protein] + ATP = O-phospho-L-seryl-[protein] + ADP + H(+). The catalysed reaction is L-threonyl-[protein] + ATP = O-phospho-L-threonyl-[protein] + ADP + H(+). Functionally, CIPK serine-threonine protein kinases interact with CBL proteins. Binding of a CBL protein to the regulatory NAF domain of CIPK protein lead to the activation of the kinase in a calcium-dependent manner. This Arabidopsis thaliana (Mouse-ear cress) protein is CBL-interacting serine/threonine-protein kinase 21 (CIPK21).